The sequence spans 284 residues: NH(3)-dependent NAD(+) synthetase (284 aa).

An ATP-binding site is contributed by 51 to 58 (GISGGIDS). D57 lines the Mg(2+) pocket. Residue R148 coordinates deamido-NAD(+). T168 provides a ligand contact to ATP. E173 provides a ligand contact to Mg(2+). 2 residues coordinate deamido-NAD(+): K181 and D188. ATP is bound by residues K197 and T219. 268–269 (HK) provides a ligand contact to deamido-NAD(+).

It belongs to the NAD synthetase family. Homodimer.

The enzyme catalyses deamido-NAD(+) + NH4(+) + ATP = AMP + diphosphate + NAD(+) + H(+). The protein operates within cofactor biosynthesis; NAD(+) biosynthesis; NAD(+) from deamido-NAD(+) (ammonia route): step 1/1. Functionally, catalyzes the ATP-dependent amidation of deamido-NAD to form NAD. Uses ammonia as a nitrogen source. This is NH(3)-dependent NAD(+) synthetase from Burkholderia mallei (strain NCTC 10247).